A 409-amino-acid chain; its full sequence is Calsequestrin-2 (409 aa).

The signal sequence occupies residues 1-19; that stretch reads MKRAHLFVVGVYLLSSCRA. Phosphotyrosine is present on tyrosine 282. Asparagine 335 carries an N-linked (GlcNAc...) asparagine glycan. The segment at 364–409 is disordered; the sequence is DVLSGKINTEDDDNEDEDDDDDNDDDDDDNGNSDEEDNDDSDEDDE. A compositionally biased stretch (acidic residues) spans 373-409; that stretch reads EDDDNEDEDDDDDNDDDDDDNGNSDEEDNDDSDEDDE.

The protein belongs to the calsequestrin family. As to quaternary structure, monomer, homodimer and homooligomer. Mostly monomeric in the absence of calcium. Forms higher oligomers in a calcium-dependent manner. Dimers associate to form tetramers, that then form linear homomer chains. Interacts with ASPH and TRDN. Phosphorylation in the C-terminus, probably by CK2, moderately increases calcium buffering capacity. Post-translationally, N-glycosylated. Detected in heart muscle (at protein level).

It localises to the sarcoplasmic reticulum lumen. Calsequestrin is a high-capacity, moderate affinity, calcium-binding protein and thus acts as an internal calcium store in muscle. Calcium ions are bound by clusters of acidic residues at the protein surface, especially at the interface between subunits. Can bind around 60 Ca(2+) ions. Regulates the release of lumenal Ca(2+) via the calcium release channel RYR2; this plays an important role in triggering muscle contraction. Plays a role in excitation-contraction coupling in the heart and in regulating the rate of heart beats. This Oryctolagus cuniculus (Rabbit) protein is Calsequestrin-2 (CASQ2).